A 585-amino-acid polypeptide reads, in one-letter code: Frizzled-10 (585 aa).

Positions 1-24 are cleaved as a signal peptide; sequence MGPAAGNLVRAVLALCWLAEHCAG. The Extracellular portion of the chain corresponds to 25–229; the sequence is ISSIDIERPG…DVYWSKDDKQ (205 aa). The FZ domain maps to 33–154; it reads PGDGRCQPIE…NDPNYLCMEA (122 aa). Cystine bridges form between C38–C99, C46–C92, C83–C121, C110–C151, and C114–C138. N-linked (GlcNAc...) asparagine glycosylation occurs at N52. The segment at 155 to 195 is disordered; it reads PNNGSDEPPRGSSMLPPMFRPQRPSTGHDLQQHKDSLSRTS. N157 carries an N-linked (GlcNAc...) asparagine glycan. Residues 230-250 form a helical membrane-spanning segment; that stretch reads FAVIWIAIWSILCFFSSAFTV. The Cytoplasmic segment spans residues 251 to 265; it reads LTFLIDPQRFKYPER. Residues 266-286 form a helical membrane-spanning segment; it reads PIIFLSMCYCVYSVGYIIRLF. Over 287–314 the chain is Extracellular; it reads SGAESIACDRDSGQLYVIQEGLESTGCT. The chain crosses the membrane as a helical span at residues 315–335; the sequence is IVFLVLYYFGMASSLWWVILT. The Cytoplasmic portion of the chain corresponds to 336-355; sequence LTWFLAAGKKWGHEAIEANS. Residues 356 to 376 traverse the membrane as a helical segment; sequence SYFHLAAWAIPAVKTIMILVM. Residues 377–397 lie on the Extracellular side of the membrane; that stretch reads RRVAGDELTGLCYVGSMDVNA. A helical membrane pass occupies residues 398 to 418; sequence LTGFVLIPLACYLIIGTSFIL. Over 419–447 the chain is Cytoplasmic; that stretch reads SGFVALFHIRRVMKTGGENTDKLEKLMVR. The chain crosses the membrane as a helical span at residues 448–468; that stretch reads IGVFSVLYTVPATCVIACYFY. The Extracellular segment spans residues 469-506; the sequence is ERLNMDYWKIVASQQKCKMNNQTKNLDCMMNNSIPAVE. N489 and N499 each carry an N-linked (GlcNAc...) asparagine glycan. The chain crosses the membrane as a helical span at residues 507–527; it reads IFMVKIFMLLVVGITSGMWIW. At 528-585 the chain is on the cytoplasmic side; that stretch reads TSKTLQSWQNVCSRRLKKRSRRKPASVITSSGIYKKPQHPQKTHLAKYESTLQPPTCV. Positions 530–535 match the Lys-Thr-X-X-X-Trp motif, mediates interaction with the PDZ domain of Dvl family members motif; it reads KTLQSW. The short motif at 583–585 is the PDZ-binding element; it reads TCV.

This sequence belongs to the G-protein coupled receptor Fz/Smo family. In terms of assembly, interacts with WNT7A. As to expression, expressed in the dorsal ectoderm overlying the developing spinal cord.

The protein resides in the cell membrane. In terms of biological role, receptor for Wnt proteins. Functions in the canonical Wnt/beta-catenin signaling pathway. Activation by WNT7A induces expression of beta-catenin target genes. The canonical Wnt/beta-catenin signaling pathway leads to the activation of disheveled proteins, inhibition of GSK-3 kinase, nuclear accumulation of beta-catenin and activation of Wnt target genes. A second signaling pathway involving PKC and calcium fluxes has been seen for some family members, but it is not yet clear if it represents a distinct pathway or if it can be integrated in the canonical pathway, as PKC seems to be required for Wnt-mediated inactivation of GSK-3 kinase. Both pathways seem to involve interactions with G-proteins. May be involved in transduction and intercellular transmission of polarity information during tissue morphogenesis and/or in differentiated tissues. The polypeptide is Frizzled-10 (FZD10) (Gallus gallus (Chicken)).